A 319-amino-acid chain; its full sequence is Ribonucleoside-diphosphate reductase 2 subunit beta (319 aa).

Fe cation is bound by residues D67, E98, and H101. Y105 is an active-site residue. Fe cation-binding residues include E158, E192, and H195.

The protein belongs to the ribonucleoside diphosphate reductase small chain family. In terms of assembly, tetramer of two alpha and two beta subunits. Fe cation serves as cofactor.

It carries out the reaction a 2'-deoxyribonucleoside 5'-diphosphate + [thioredoxin]-disulfide + H2O = a ribonucleoside 5'-diphosphate + [thioredoxin]-dithiol. Functionally, provides the precursors necessary for DNA synthesis. Catalyzes the biosynthesis of deoxyribonucleotides from the corresponding ribonucleotides. R2F contains the tyrosyl radical required for catalysis. The sequence is that of Ribonucleoside-diphosphate reductase 2 subunit beta (nrdF) from Escherichia coli (strain K12).